The chain runs to 346 residues: MTQSLTIRRPDDWHLHLRDGAMLAAVLPETARHFARAIVMPNLVPPVVTGAQAAAYRDRILATLPKGMNFEPLMTLYLTEQTDPDDLAAAHTSGLITSVKLYPAGATTNSASGVKDFDKVRPVLERMAEIGCPLCVHGEVTDREIDIFDREAVFIDRVLDPIRRATPGLRVIMEHITTKDGADYVAANPEGLGATITVQHLMFDRNDMLVGGMRPHYYCLPILKRRHHREALVAAATSGDARYFLGTDSAPHPTHAKEAECCAAGCFTAPIALSCLAHVFEEAGALDKLEGFTSLNGPAFYGLPVNADTITLSKADPLDIPKTLPAGEHTVTVFDPGVPLHWRVTR.

2 residues coordinate Zn(2+): H14 and H16. Residues 16–18 (HLR) and N42 each bind substrate. Zn(2+)-binding residues include K100, H137, and H175. Position 100 is an N6-carboxylysine (K100). Residue H137 coordinates substrate. L220 is a binding site for substrate. Position 248 (D248) interacts with Zn(2+). D248 is an active-site residue. H252 and A264 together coordinate substrate.

Belongs to the metallo-dependent hydrolases superfamily. DHOase family. Class II DHOase subfamily. Homodimer. The cofactor is Zn(2+).

It carries out the reaction (S)-dihydroorotate + H2O = N-carbamoyl-L-aspartate + H(+). Its pathway is pyrimidine metabolism; UMP biosynthesis via de novo pathway; (S)-dihydroorotate from bicarbonate: step 3/3. Catalyzes the reversible cyclization of carbamoyl aspartate to dihydroorotate. This Ruegeria pomeroyi (strain ATCC 700808 / DSM 15171 / DSS-3) (Silicibacter pomeroyi) protein is Dihydroorotase.